The following is a 246-amino-acid chain: Probable transcriptional regulatory protein CGSHiEE_01480 (246 aa).

It belongs to the TACO1 family.

The protein resides in the cytoplasm. The polypeptide is Probable transcriptional regulatory protein CGSHiEE_01480 (Haemophilus influenzae (strain PittEE)).